The following is a 130-amino-acid chain: Small ribosomal subunit protein uS9 (130 aa).

The protein belongs to the universal ribosomal protein uS9 family.

The protein is Small ribosomal subunit protein uS9 of Bacillus anthracis (strain A0248).